A 153-amino-acid chain; its full sequence is Troponin C (153 aa).

Alanine 1 is subject to Blocked amino end (Ala). EF-hand domains are found at residues 10–45 (EQVQMLRKAFDMFDRDKKGVIHTNMVSTILRTLGQT), 46–81 (FEEKDLKDLIAEIDQDGSGELEFEEFMALAARFLVE), 86–121 (AMQEELREAFRLYDKQGQGFINVSDLRDILRALDDK), and 122–153 (LTEDELDEMIAEIDTDGSGTVDFDEFMEMMTG). Residues aspartate 59, aspartate 61, serine 63, glutamate 65, glutamate 70, aspartate 99, aspartate 110, aspartate 135, aspartate 137, serine 139, threonine 141, and glutamate 146 each contribute to the Ca(2+) site.

The protein belongs to the troponin C family.

Functionally, troponin is the central regulatory protein of striated muscle contraction. Tn consists of three components: Tn-I which is the inhibitor of actomyosin ATPase, Tn-T which contains the binding site for tropomyosin and Tn-C. The binding of calcium to Tn-C abolishes the inhibitory action of Tn on actin filaments. This chain is Troponin C, found in Tachypleus tridentatus (Japanese horseshoe crab).